Here is a 501-residue protein sequence, read N- to C-terminus: Iroquois-class homeodomain protein IRX-3 (501 aa).

The homeobox; TALE-type DNA-binding region spans 125 to 188 (FGDPSRPKNA…ANARRRLKKE (64 aa)). The segment at 190–381 (KMTWAPRSRT…SPPGAAVAPS (192 aa)) is disordered. Composition is skewed to acidic residues over residues 210–220 (REEEDEEEDEE) and 227–258 (ELEE…DLEN). Ser323 and Ser326 each carry phosphoserine. Over residues 324–339 (LPSPPVSLDPCAPAPA) the composition is skewed to pro residues.

This sequence belongs to the TALE/IRO homeobox family.

Its subcellular location is the nucleus. Transcription factor involved in SHH-dependent neural patterning. Together with NKX2-2 and NKX6-1 acts to restrict the generation of motor neurons to the appropriate region of the neural tube. Belongs to the class I proteins of neuronal progenitor factors, which are repressed by SHH signals. Involved in the transcriptional repression of MNX1 in non-motor neuron cells. Acts as a regulator of energy metabolism. This is Iroquois-class homeodomain protein IRX-3 (IRX3) from Homo sapiens (Human).